Reading from the N-terminus, the 84-residue chain is Cell division topological specificity factor (84 aa).

Belongs to the MinE family.

Its function is as follows. Prevents the cell division inhibition by proteins MinC and MinD at internal division sites while permitting inhibition at polar sites. This ensures cell division at the proper site by restricting the formation of a division septum at the midpoint of the long axis of the cell. The polypeptide is Cell division topological specificity factor (Paraburkholderia xenovorans (strain LB400)).